We begin with the raw amino-acid sequence, 503 residues long: Cytochrome P450 3A8 (503 aa).

A heme-binding site is contributed by C442.

The protein belongs to the cytochrome P450 family. The cofactor is heme.

It is found in the endoplasmic reticulum membrane. The protein resides in the microsome membrane. It carries out the reaction an organic molecule + reduced [NADPH--hemoprotein reductase] + O2 = an alcohol + oxidized [NADPH--hemoprotein reductase] + H2O + H(+). Catalyzes nifedipine and nilvadipine oxidations. In Macaca fascicularis (Crab-eating macaque), this protein is Cytochrome P450 3A8 (CYP3A8).